The primary structure comprises 216 residues: GTP cyclohydrolase 1 (216 aa).

Zn(2+) contacts are provided by cysteine 109, histidine 112, and cysteine 180.

Belongs to the GTP cyclohydrolase I family. As to quaternary structure, toroid-shaped homodecamer, composed of two pentamers of five dimers.

The enzyme catalyses GTP + H2O = 7,8-dihydroneopterin 3'-triphosphate + formate + H(+). It functions in the pathway cofactor biosynthesis; 7,8-dihydroneopterin triphosphate biosynthesis; 7,8-dihydroneopterin triphosphate from GTP: step 1/1. The protein is GTP cyclohydrolase 1 of Wigglesworthia glossinidia brevipalpis.